Consider the following 156-residue polypeptide: Small ribosomal subunit protein uS7A/uS7B (156 aa).

This sequence belongs to the universal ribosomal protein uS7 family. As to quaternary structure, part of the 30S ribosomal subunit. Contacts proteins S9 and S11.

In terms of biological role, one of the primary rRNA binding proteins, it binds directly to 16S rRNA where it nucleates assembly of the head domain of the 30S subunit. Is located at the subunit interface close to the decoding center, probably blocks exit of the E-site tRNA. The chain is Small ribosomal subunit protein uS7A/uS7B from Bartonella bacilliformis (strain ATCC 35685 / KC583 / Herrer 020/F12,63).